The following is a 1156-amino-acid chain: Nitric oxide synthase, inducible (1156 aa).

A DINNN-motif; mediates interaction with SPSB1, SPSB2 and SPSB4 motif is present at residues 23–27; it reads DINNN. Residues 27–84 are disordered; the sequence is NVGKFYQPPSSPVTQDDPKRHSPGKHGNESPQPLTGTVKTSPESLSKLDAPPSACPRH. Over residues 55–70 the composition is skewed to polar residues; that stretch reads ESPQPLTGTVKTSPES. Zn(2+) is bound by residues Cys110 and Cys115. (6R)-L-erythro-5,6,7,8-tetrahydrobiopterin is bound at residue Ser118. Cys200 is a heme b binding site. Gln263, Trp372, Tyr373, and Glu377 together coordinate L-arginine. The (6R)-L-erythro-5,6,7,8-tetrahydrobiopterin site is built by Arg381, Ile462, Trp463, and Phe476. Residue Tyr491 coordinates heme b. A calmodulin-binding region spans residues 515 to 535; that stretch reads FKVLVKAVFFASVLMHKAMAS. The 139-residue stretch at 539–677 folds into the Flavodoxin-like domain; sequence ATILFATETG…AFRSWAVQTF (139 aa). Residues Thr545, Glu546, Thr547, Arg549, and Ser550 each contribute to the FMN site. Tyr575 carries the phosphotyrosine modification. FMN is bound by residues Ser591, Thr592, Ser628, Cys635, Glu661, and Gln665. The 241-residue stretch at 730–970 folds into the FAD-binding FR-type domain; that stretch reads KHVFTMRLKS…VRSASGFQLP (241 aa). Arg750 contacts NADP(+). Positions 772, 906, 908, 909, 924, and 926 each coordinate FAD. Residue Thr929 coordinates NADP(+). FAD-binding residues include Tyr930, Val943, Cys944, and Ser945. Residues Thr984, Arg1017, Ser1046, Arg1047, Lys1053, Tyr1055, Gln1057, and Asp1090 each contribute to the NADP(+) site.

This sequence belongs to the NOS family. Homodimer. Interacts with NHERF1. Interacts with GAPDH; induced by oxidatively-modified low-densitity lipoprotein (LDL(ox)). Interacts with S100A8 and S100A9 to form the iNOS-S100A8/9 transnitrosylase complex. Interacts with SPSB1, SPSB2 and SPSB4. Interacts with ELOC and CUL5 in the presence of SPSB1 or SPSB2 or SPSB4. Forms a complex with ASL, ASS1 and HSP90AA1; the complex regulates cell-autonomous L-arginine synthesis and citrulline recycling while channeling extracellular L-arginine to nitric oxide synthesis pathway. It depends on heme b as a cofactor. The cofactor is FAD. FMN serves as cofactor. (6R)-L-erythro-5,6,7,8-tetrahydrobiopterin is required as a cofactor. Post-translationally, polyubiquitinated; mediated by SPSB1, SPSB2 and SPSB4, leading to proteasomal degradation.

Its subcellular location is the cytoplasm. The protein localises to the cytosol. The enzyme catalyses 2 L-arginine + 3 NADPH + 4 O2 + H(+) = 2 L-citrulline + 2 nitric oxide + 3 NADP(+) + 4 H2O. Regulated by calcium/calmodulin. In terms of biological role, produces nitric oxide (NO) which is a messenger molecule with diverse functions throughout the body. In macrophages, NO mediates tumoricidal and bactericidal actions. Also has nitrosylase activity and mediates cysteine S-nitrosylation of cytoplasmic target proteins such PTGS2/COX2. As component of the iNOS-S100A8/9 transnitrosylase complex involved in the selective inflammatory stimulus-dependent S-nitrosylation of GAPDH implicated in regulation of the GAIT complex activity and probably multiple targets including ANXA5, EZR, MSN and VIM. Involved in inflammation, enhances the synthesis of pro-inflammatory mediators such as IL6 and IL8. In Bos taurus (Bovine), this protein is Nitric oxide synthase, inducible (NOS2).